The chain runs to 105 residues: MELTRVILHPYTTEKTYSIRNKSEHETLTFIVDKNANKYQIREAFIAIFGLKPLKIRTTNRRPAKIRTSTARPGYTKAKKIAYVVMPVGVKVAVSKEEVEAANAK.

It belongs to the universal ribosomal protein uL23 family. Part of the 50S ribosomal subunit. Contacts protein L29, and trigger factor when it is bound to the ribosome.

Functionally, one of the early assembly proteins it binds 23S rRNA. One of the proteins that surrounds the polypeptide exit tunnel on the outside of the ribosome. Forms the main docking site for trigger factor binding to the ribosome. This is Large ribosomal subunit protein uL23 from Ureaplasma parvum serovar 3 (strain ATCC 27815 / 27 / NCTC 11736).